The sequence spans 105 residues: Small ribosomal subunit protein uS10c (105 aa).

Belongs to the universal ribosomal protein uS10 family. In terms of assembly, part of the 30S ribosomal subunit.

The protein resides in the plastid. It localises to the cyanelle. In terms of biological role, involved in the binding of tRNA to the ribosomes. The protein is Small ribosomal subunit protein uS10c (rps10) of Cyanophora paradoxa.